A 131-amino-acid polypeptide reads, in one-letter code: MSWQAYVDDHLMCEIEGNHLSAAAIIGHDGVVWAQSATFPQVKPEEITGIMNDFNEPGSLAPTGLYLGGTKYMVIQGEPGAVIRGKKGPGGVTIKKTTMSLIIGIYDEPMTPGQCNMLVERPGDYLLEQGF.

Belongs to the profilin family. In terms of assembly, occurs in many kinds of cells as a complex with monomeric actin in a 1:1 ratio.

It localises to the cytoplasm. Its subcellular location is the cytoskeleton. Binds to actin and affects the structure of the cytoskeleton. At high concentrations, profilin prevents the polymerization of actin, whereas it enhances it at low concentrations. By binding to PIP2, it inhibits the formation of IP3 and DG. The chain is Profilin-1 from Ambrosia artemisiifolia (Common ragweed).